Reading from the N-terminus, the 279-residue chain is Reaction center protein L chain (279 aa).

The next 3 membrane-spanning stretches (helical) occupy residues 33-56, 85-113, and 116-141; these read GFFGVTTLFFSVLGTALIIWGASQ, GLWQIITVCAIGAFVSWALREVEICRKLG, and YHVPIAFSFAILAYVTLVVIRPILMG. (7R,8Z)-bacteriochlorophyll b is bound by residues His154 and His174. A helical membrane pass occupies residues 171–200; the sequence is NPAHMLAITFFFTTTLAMSMHGGLILSAAN. Residue His191 coordinates Fe cation. A ubiquinone is bound at residue Phe217. A helical membrane pass occupies residues 226 to 252; sequence GSLGIHRLGLFLALSAAFWSAVCIVIS. Residue His231 participates in Fe cation binding.

This sequence belongs to the reaction center PufL/M/PsbA/D family. As to quaternary structure, reaction center is composed of four bacteriochlorophylls, two bacteriopheophytins, two ubiquinones, one iron, and three highly hydrophobic polypeptide chains (designated L, M, and H).

The protein localises to the cell inner membrane. Its function is as follows. The reaction center is a membrane-bound complex that mediates the initial photochemical event in the electron transfer process of photosynthesis. This chain is Reaction center protein L chain (pufL), found in Rubrivivax gelatinosus (Rhodocyclus gelatinosus).